A 330-amino-acid chain; its full sequence is Ferric enterobactin transport system permease protein FepG (330 aa).

Over 1 to 7 (MIYVSRR) the chain is Periplasmic. A helical membrane pass occupies residues 8-28 (LLITCLLLVSACVVAGIWGLR). The Cytoplasmic portion of the chain corresponds to 29 to 62 (SGAVTLETSQVFAALMGDAPRSMTMVVTEWRLPR). A helical transmembrane segment spans residues 63 to 83 (VLMALLIGAALGVSGAIFQSL). Residues 84–92 (MRNPLGSPD) are Periplasmic-facing. A helical membrane pass occupies residues 93-113 (VMGFNTGAWSGVLVAMVLFGQ). The Cytoplasmic segment spans residues 114–117 (DLTA). The helical transmembrane segment at 118-138 (IALSAMVGGIVTSLLVWLLAW) threads the bilayer. At 139 to 146 (RNGIDTFR) the chain is on the periplasmic side. The chain crosses the membrane as a helical span at residues 147 to 167 (LIIIGIGVRAMLVAFNTWLLL). Over 168–190 (KASLETALTAGLWNAGSLNGLTW) the chain is Cytoplasmic. Residues 191-211 (AKTSPSAPIIILMLIAAALLV) traverse the membrane as a helical segment. The Periplasmic segment spans residues 212–235 (RRMRLLEMGDDTACALGVSVERSR). Residues 236-256 (LLMMLVAVVLTAAATALAGPI) traverse the membrane as a helical segment. Residues 257 to 275 (SFIALVAPHIARRISGTAR) are Cytoplasmic-facing. Residues 276-296 (WGLTQAALCGALLLLAADLCA) form a helical membrane-spanning segment. Residues 297-303 (QQLFMPY) lie on the Periplasmic side of the membrane. Residues 304–324 (QLPVGVVTVSLGGIYLIVLLI) traverse the membrane as a helical segment. The Cytoplasmic segment spans residues 325-330 (QESRKK).

This sequence belongs to the binding-protein-dependent transport system permease family. FecCD subfamily. As to quaternary structure, the complex is composed of two ATP-binding proteins (FepC), two transmembrane proteins (FepD and FepG) and a solute-binding protein (FepB).

The protein resides in the cell inner membrane. Part of the ABC transporter complex FepBDGC involved in ferric enterobactin uptake. Responsible for the translocation of the substrate across the membrane. In Escherichia coli (strain K12), this protein is Ferric enterobactin transport system permease protein FepG (fepG).